The primary structure comprises 20 residues: Unknown protein NF015 from 2D-PAGE (20 aa).

A disordered region spans residues 1 to 20; sequence TPQIQKPAPQFSKTALLPDE.

In Naegleria fowleri (Brain eating amoeba), this protein is Unknown protein NF015 from 2D-PAGE.